The primary structure comprises 153 residues: NADPH-dependent 7-cyano-7-deazaguanine reductase (153 aa).

Residues 1 to 22 are disordered; the sequence is MTDNRYDNLGQLGTSTPLPDNP. Cys-51 (thioimide intermediate) is an active-site residue. The active-site Proton donor is the Asp-58. Substrate is bound by residues 73-75 and 92-93; these read VES and HE.

Belongs to the GTP cyclohydrolase I family. QueF type 1 subfamily.

It is found in the cytoplasm. It catalyses the reaction 7-aminomethyl-7-carbaguanine + 2 NADP(+) = 7-cyano-7-deazaguanine + 2 NADPH + 3 H(+). The protein operates within tRNA modification; tRNA-queuosine biosynthesis. Its function is as follows. Catalyzes the NADPH-dependent reduction of 7-cyano-7-deazaguanine (preQ0) to 7-aminomethyl-7-deazaguanine (preQ1). In Maricaulis maris (strain MCS10) (Caulobacter maris), this protein is NADPH-dependent 7-cyano-7-deazaguanine reductase.